Consider the following 95-residue polypeptide: Ribonuclease kappa-B (95 aa).

The next 2 membrane-spanning stretches (helical) occupy residues 12–32 (GLII…FFYI) and 68–88 (CWIA…QFYV).

This sequence belongs to the RNase K family.

It is found in the membrane. Inhibited by Zn(2+) and Hg(2+), while it is unaffected by Ca(2+). In terms of biological role, endoribonuclease which displays activity against poly(C) and poly(U) synthetic substrates, as well as rRNA. This Ceratitis capitata (Mediterranean fruit fly) protein is Ribonuclease kappa-B.